We begin with the raw amino-acid sequence, 392 residues long: Chalcone synthase B (392 aa).

Residue C167 is part of the active site.

The protein belongs to the thiolase-like superfamily. Chalcone/stilbene synthases family. In terms of tissue distribution, expressed at low level in seedlings after illumination with UV light. No expression in flowers or tissue culture.

It carries out the reaction (E)-4-coumaroyl-CoA + 3 malonyl-CoA + 3 H(+) = 2',4,4',6'-tetrahydroxychalcone + 3 CO2 + 4 CoA. It functions in the pathway secondary metabolite biosynthesis; flavonoid biosynthesis. Its function is as follows. The primary product of this enzyme is 4,2',4',6'-tetrahydroxychalcone (also termed naringenin-chalcone or chalcone) which can under specific conditions spontaneously isomerize into naringenin. This is Chalcone synthase B (CHSB) from Petunia hybrida (Petunia).